Consider the following 307-residue polypeptide: Porphobilinogen deaminase (307 aa).

Cys-239 is subject to S-(dipyrrolylmethanemethyl)cysteine.

It belongs to the HMBS family. As to quaternary structure, monomer. It depends on dipyrromethane as a cofactor.

The catalysed reaction is 4 porphobilinogen + H2O = hydroxymethylbilane + 4 NH4(+). It participates in porphyrin-containing compound metabolism; protoporphyrin-IX biosynthesis; coproporphyrinogen-III from 5-aminolevulinate: step 2/4. In terms of biological role, tetrapolymerization of the monopyrrole PBG into the hydroxymethylbilane pre-uroporphyrinogen in several discrete steps. The chain is Porphobilinogen deaminase from Campylobacter jejuni subsp. doylei (strain ATCC BAA-1458 / RM4099 / 269.97).